We begin with the raw amino-acid sequence, 266 residues long: Putative carbamate hydrolase RutD (266 aa).

One can recognise an AB hydrolase-1 domain in the interval 14 to 119 (PVVVLSAGLG…LVNGWLSLSP (106 aa)).

This sequence belongs to the AB hydrolase superfamily. Hydrolase RutD family.

The catalysed reaction is carbamate + 2 H(+) = NH4(+) + CO2. Involved in pyrimidine catabolism. May facilitate the hydrolysis of carbamate, a reaction that can also occur spontaneously. The chain is Putative carbamate hydrolase RutD from Klebsiella pneumoniae subsp. pneumoniae (strain ATCC 700721 / MGH 78578).